A 329-amino-acid chain; its full sequence is Phosphate acetyltransferase (329 aa).

It belongs to the phosphate acetyltransferase and butyryltransferase family.

The protein resides in the cytoplasm. The catalysed reaction is acetyl-CoA + phosphate = acetyl phosphate + CoA. It participates in metabolic intermediate biosynthesis; acetyl-CoA biosynthesis; acetyl-CoA from acetate: step 2/2. In Corynebacterium glutamicum (strain ATCC 13032 / DSM 20300 / JCM 1318 / BCRC 11384 / CCUG 27702 / LMG 3730 / NBRC 12168 / NCIMB 10025 / NRRL B-2784 / 534), this protein is Phosphate acetyltransferase (pta).